Reading from the N-terminus, the 657-residue chain is Folic acid synthesis protein FOL1 (657 aa).

A DHNA region spans residues 1–116; that stretch reads MDKIIIKDLL…WPGVQIERTL (116 aa). The interval 149-274 is HPPK; that stretch reads YLAFGSNLGD…FVLLPLSDIA (126 aa). One can recognise a Pterin-binding domain in the interval 333-641; that stretch reads TFIMGILNVT…DIPEIRDAML (309 aa). Residues 335 to 657 form a DHPS region; the sequence is IMGILNVTPD…KPQRRYQIQK (323 aa). N340 lines the Mg(2+) pocket. The (7,8-dihydropterin-6-yl)methyl diphosphate site is built by T380, D416, and N435. The interval 466 to 524 is disordered; it reads LNNSNDSNSNSSINTNGEDNNNNNNNNNNNNNNNNNNNNNNNNNDDNDNDNRSKIKQKI. The segment covering 467–509 has biased composition (low complexity); it reads NNSNDSNSNSSINTNGEDNNNNNNNNNNNNNNNNNNNNNNNNN. Residues 514 to 524 are compositionally biased toward basic and acidic residues; it reads NDNRSKIKQKI. (7,8-dihydropterin-6-yl)methyl diphosphate is bound by residues D547, K583, and 629–631; that span reads RIH.

The protein in the N-terminal section; belongs to the DHNA family. It in the central section; belongs to the HPPK family. In the C-terminal section; belongs to the DHPS family. Mg(2+) is required as a cofactor.

The enzyme catalyses 7,8-dihydroneopterin = 6-hydroxymethyl-7,8-dihydropterin + glycolaldehyde. It carries out the reaction 6-hydroxymethyl-7,8-dihydropterin + ATP = (7,8-dihydropterin-6-yl)methyl diphosphate + AMP + H(+). It catalyses the reaction (7,8-dihydropterin-6-yl)methyl diphosphate + 4-aminobenzoate = 7,8-dihydropteroate + diphosphate. The protein operates within cofactor biosynthesis; tetrahydrofolate biosynthesis; 2-amino-4-hydroxy-6-hydroxymethyl-7,8-dihydropteridine diphosphate from 7,8-dihydroneopterin triphosphate: step 3/4. It participates in cofactor biosynthesis; tetrahydrofolate biosynthesis; 2-amino-4-hydroxy-6-hydroxymethyl-7,8-dihydropteridine diphosphate from 7,8-dihydroneopterin triphosphate: step 4/4. It functions in the pathway cofactor biosynthesis; tetrahydrofolate biosynthesis; 7,8-dihydrofolate from 2-amino-4-hydroxy-6-hydroxymethyl-7,8-dihydropteridine diphosphate and 4-aminobenzoate: step 1/2. Its function is as follows. Catalyzes three sequential steps of tetrahydrofolate biosynthesis. The chain is Folic acid synthesis protein FOL1 (fol1) from Dictyostelium discoideum (Social amoeba).